A 561-amino-acid polypeptide reads, in one-letter code: Long-chain-fatty-acid--CoA ligase (561 aa).

Position 213–224 (213–224 (YTGGTTGVAKGA)) interacts with ATP.

Belongs to the ATP-dependent AMP-binding enzyme family. It depends on Mg(2+) as a cofactor.

The protein resides in the membrane. The catalysed reaction is a long-chain fatty acid + ATP + CoA = a long-chain fatty acyl-CoA + AMP + diphosphate. Its pathway is lipid metabolism; fatty acid beta-oxidation. Its function is as follows. Catalyzes the esterification, concomitant with transport, of exogenous long-chain fatty acids into metabolically active CoA thioesters for subsequent degradation or incorporation into phospholipids. This Salmonella typhi protein is Long-chain-fatty-acid--CoA ligase (fadD).